A 1085-amino-acid polypeptide reads, in one-letter code: Ubiquitin carboxyl-terminal hydrolase 36 (1085 aa).

A compositionally biased stretch (low complexity) spans 23–36 (GGNSSAAGSSADQA). 2 disordered regions span residues 23 to 47 (GGNSSAAGSSADQAKSGEESNGSLQ) and 104 to 149 (KVVG…PKPK). One can recognise a USP domain in the interval 173–481 (TGMINVGNTC…NAYIMFYELD (309 aa)). The active-site Nucleophile is cysteine 182. Catalysis depends on histidine 440, which acts as the Proton acceptor. 4 disordered regions span residues 489–730 (AANR…NNSK), 745–888 (KSAD…ELLK), 963–1030 (EQRQ…FYNQ), and 1043–1085 (KFNR…QQQS). Positions 503–518 (STTPVPATTVSSPSPT) are enriched in low complexity. Phosphoserine is present on residues serine 514 and serine 516. Over residues 532–542 (GYSNGNAQKTA) the composition is skewed to polar residues. The segment covering 588–609 (NGNKSSSTSSNNSSSSNHKSIN) has biased composition (low complexity). Residues 642-651 (MTDDHTEKPK) show a composition bias toward basic and acidic residues. Phosphothreonine occurs at positions 660 and 664. A phosphoserine mark is found at serine 674 and serine 676. Over residues 705–730 (TNGHSKTNGSLTNGSASSSVHVNNSK) the composition is skewed to polar residues. Serine 749 bears the Phosphoserine mark. Acidic residues predominate over residues 749 to 758 (SDDDDDEEES). Residues 768 to 778 (PQKQSQSQSKA) are compositionally biased toward low complexity. Residues 779–788 (PPSPKTPPSP) show a composition bias toward pro residues. At serine 781 the chain carries Phosphoserine. Threonine 784 carries the post-translational modification Phosphothreonine. Serine 787 is modified (phosphoserine). Acidic residues predominate over residues 805-818 (EVDDIDDDDDEEEE). Over residues 822-844 (KIQTPSKTHRNPFSSSKPSTDSP) the composition is skewed to polar residues. At threonine 825 the chain carries Phosphothreonine. Serine 843 is subject to Phosphoserine. Position 846 is a phosphothreonine (threonine 846). Polar residues predominate over residues 859–884 (PVKSHQQPRVGNGYQSEATSNGSTIN). Composition is skewed to low complexity over residues 987–998 (SGSAKGNNASNS) and 1056–1066 (QQQRALQRHLA).

The protein belongs to the peptidase C19 family. In terms of assembly, interacts with atms/PAF1, but not with CycT.

It localises to the nucleus. The protein resides in the nucleolus. It carries out the reaction Thiol-dependent hydrolysis of ester, thioester, amide, peptide and isopeptide bonds formed by the C-terminal Gly of ubiquitin (a 76-residue protein attached to proteins as an intracellular targeting signal).. Its function is as follows. Required for maintaining multiple types of adult stem cells, including male and female germline, epithelial follicle cell and intestinal stem cells. May function as a transcriptional repressor by continually deubiquiting histone H2B at the promoters of genes critical for cellular differentiation, thereby preventing histone H3 'Lys-4' trimethylation (H3K4). Controls selective autophagy activation by ubiquitinated proteins. This chain is Ubiquitin carboxyl-terminal hydrolase 36 (Usp36), found in Drosophila erecta (Fruit fly).